The chain runs to 528 residues: MGADNELSEFEKQRLANIAERDALLKKLSLDAQSSGLFPPKSARSSPGGQTKPKKKPPPKKVKKEDEHPVPRRMSSRLRGLAADSEVAKRKADEQYEAAQQAERAKRVRKSDAFSFSEMLVSGQKLSGDSLIGVDVVTKGVAMPYQRTFGDEDIKKTTDKELKALREEMSGLRLWEAWEPNRIKLTPERIYTMTFHPSEAKPLIFAGDKMGNLGVLDASQEKPTSAVKQEDDEEDAEDDDPDPVLTTLKPHTRTISSLHIHPSKPTHLYSASYDSSIRELDLEKTTSVEKYAPESTSDDIPISGIDMAPDDPNTLYWTTLDGAFGRYDTRASRRSAVATWQLSEKKIGGFSLFPTHPHFFATASLDRTMRLWDIRKLSHDDPVPVGEHVSRLSVSHAAFNSAGQIATSSYDDTLKIYDFGSKGIAAWEPGYTLSDAEMKPDTIVRHNCQTGRWVTILRPQWQANPQSSIQRFCIGNMNRFVDVYSSSGDQLAQLGGDGITAVPAVAVFHCSTNWIAGGTASGKICLWM.

2 disordered regions span residues 32-98 and 217-243; these read AQSS…QYEA and DASQ…DPDP. Basic residues predominate over residues 52-62; it reads KPKKKPPPKKV. Residues 185 to 226 form a WD 1 repeat; sequence LTPERIYTMTFHPSEAKPLIFAGDKMGNLGVLDASQEKPTSA. Acidic residues predominate over residues 230-242; the sequence is EDDEEDAEDDDPD. WD repeat units follow at residues 250-290, 297-337, 342-382, 389-428, 451-494, and 497-528; these read PHTR…SVEK, SDDI…RSAV, LSEK…HDDP, VSRL…AAWE, GRWV…LAQL, and DGIT…CLWM.

Belongs to the WD repeat DDB2/WDR76 family.

Its function is as follows. DNA-binding protein that binds to both single- and double-stranded DNA. Binds preferentially to UV-damaged DNA. May be involved in DNA-metabolic processes. This chain is DNA damage-binding protein cmr1, found in Aspergillus fumigatus (strain CBS 144.89 / FGSC A1163 / CEA10) (Neosartorya fumigata).